The sequence spans 208 residues: Thymidylate kinase (208 aa).

11–18 (GGEGVGKS) contacts ATP.

The protein belongs to the thymidylate kinase family.

It catalyses the reaction dTMP + ATP = dTDP + ADP. Its function is as follows. Phosphorylation of dTMP to form dTDP in both de novo and salvage pathways of dTTP synthesis. The polypeptide is Thymidylate kinase (Methylococcus capsulatus (strain ATCC 33009 / NCIMB 11132 / Bath)).